A 364-amino-acid polypeptide reads, in one-letter code: Alanine racemase (364 aa).

The active-site Proton acceptor; specific for D-alanine is Lys35. N6-(pyridoxal phosphate)lysine is present on Lys35. Residue Arg130 participates in substrate binding. Tyr256 (proton acceptor; specific for L-alanine) is an active-site residue. Position 304 (Met304) interacts with substrate.

It belongs to the alanine racemase family. It depends on pyridoxal 5'-phosphate as a cofactor.

The catalysed reaction is L-alanine = D-alanine. It functions in the pathway amino-acid biosynthesis; D-alanine biosynthesis; D-alanine from L-alanine: step 1/1. In terms of biological role, catalyzes the interconversion of L-alanine and D-alanine. May also act on other amino acids. This Polaromonas sp. (strain JS666 / ATCC BAA-500) protein is Alanine racemase (alr).